The sequence spans 1755 residues: Transposon Ty1-PR1 Gag-Pol polyprotein (1755 aa).

Polar residues-rich tracts occupy residues 1 to 23 (MESQ…SVTS), 48 to 60 (TKAN…TPAS), 71 to 93 (SPQT…MMTQ), and 127 to 152 (QSQF…GNTF). Disordered regions lie at residues 1 to 93 (MESQ…MMTQ), 126 to 173 (PQSQ…RPPP), and 352 to 421 (GSRN…SKST). The segment covering 153–165 (TDSSSADSDMTST) has biased composition (low complexity). Positions 299–401 (NNGIHINNKV…NSKSKTARAH (103 aa)) are RNA-binding. Low complexity predominate over residues 402–418 (NVSTSNNSPSTDNDSIS). Residue S416 is modified to Phosphoserine. Residue D461 is the For protease activity; shared with dimeric partner of the active site. Residues 583-640 (NVHTSESTRKYPYPFIHRMLAHANAQTIRYSLKNNTITYFNESDVDWSSAIDYQCPDC) form an integrase-type zinc finger-like region. Residues 660 to 835 (NSYEPFQYLH…AGLDISTLLP (176 aa)) form the Integrase catalytic domain. Residues D671 and D736 each contribute to the Mg(2+) site. Disordered stretches follow at residues 956-1087 (SKAV…ETEK), 1092-1111 (RSPS…NIVP), and 1130-1187 (DLPL…DNET). Residues 960–969 (SPTDSTPPST) show a composition bias toward low complexity. The span at 1005–1015 (STPQISNIEST) shows a compositional bias: polar residues. Basic and acidic residues predominate over residues 1038-1053 (ESSHASKSKDFRHSDS). Composition is skewed to polar residues over residues 1054–1082 (YSEN…QISD) and 1101–1111 (PENNSSHNIVP). The Bipartite nuclear localization signal signature appears at 1178–1212 (KKRSLEDNETEIKVSRDTWNTKNMRSLEPPRSKKR). Residues 1338-1476 (NNYYITQLDI…DILGLEIKYQ (139 aa)) form the Reverse transcriptase Ty1/copia-type domain. Positions 1346, 1427, 1428, 1610, 1652, and 1685 each coordinate Mg(2+). An RNase H Ty1/copia-type domain is found at 1610-1752 (DASYGNQPYY…IKTFKLLTNK (143 aa)).

In terms of assembly, the capsid protein forms a homotrimer, from which the VLPs are assembled. The protease is a homodimer, whose active site consists of two apposed aspartic acid residues. In terms of processing, initially, virus-like particles (VLPs) are composed of the structural unprocessed proteins Gag and Gag-Pol, and also contain the host initiator methionine tRNA (tRNA(i)-Met) which serves as a primer for minus-strand DNA synthesis, and a dimer of genomic Ty RNA. Processing of the polyproteins occurs within the particle and proceeds by an ordered pathway, called maturation. First, the protease (PR) is released by autocatalytic cleavage of the Gag-Pol polyprotein yielding capsid protein p45 and a Pol-p154 precursor protein. This cleavage is a prerequisite for subsequent processing of Pol-p154 at the remaining sites to release the mature structural and catalytic proteins. Maturation takes place prior to the RT reaction and is required to produce transposition-competent VLPs.

Its subcellular location is the cytoplasm. The protein localises to the nucleus. It catalyses the reaction DNA(n) + a 2'-deoxyribonucleoside 5'-triphosphate = DNA(n+1) + diphosphate. It carries out the reaction Endonucleolytic cleavage to 5'-phosphomonoester.. Its function is as follows. Capsid protein (CA) is the structural component of the virus-like particle (VLP), forming the shell that encapsulates the retrotransposons dimeric RNA genome. The particles are assembled from trimer-clustered units and there are holes in the capsid shells that allow for the diffusion of macromolecules. CA also has nucleocapsid-like chaperone activity, promoting primer tRNA(i)-Met annealing to the multipartite primer-binding site (PBS), dimerization of Ty1 RNA and initiation of reverse transcription. The aspartyl protease (PR) mediates the proteolytic cleavages of the Gag and Gag-Pol polyproteins after assembly of the VLP. Functionally, reverse transcriptase/ribonuclease H (RT) is a multifunctional enzyme that catalyzes the conversion of the retro-elements RNA genome into dsDNA within the VLP. The enzyme displays a DNA polymerase activity that can copy either DNA or RNA templates, and a ribonuclease H (RNase H) activity that cleaves the RNA strand of RNA-DNA heteroduplexes during plus-strand synthesis and hydrolyzes RNA primers. The conversion leads to a linear dsDNA copy of the retrotransposon that includes long terminal repeats (LTRs) at both ends. In terms of biological role, integrase (IN) targets the VLP to the nucleus, where a subparticle preintegration complex (PIC) containing at least integrase and the newly synthesized dsDNA copy of the retrotransposon must transit the nuclear membrane. Once in the nucleus, integrase performs the integration of the dsDNA into the host genome. The polypeptide is Transposon Ty1-PR1 Gag-Pol polyprotein (TY1B-PR1) (Saccharomyces cerevisiae (strain ATCC 204508 / S288c) (Baker's yeast)).